A 1058-amino-acid chain; its full sequence is Bromodomain-containing protein 1 (1058 aa).

The span at 1–12 (MRRKGRCHRGSA) shows a compositional bias: basic residues. Positions 1–25 (MRRKGRCHRGSAARHPSSPCSIKHS) are disordered. Residues 31–80 (LTYAQAQRMVEIEIEGRLHRISIFDPLEIILEDDLTAQEMSECNSNKENS) are interaction with KAT7/HBO1 and histones. Ser-128 carries the phosphoserine modification. The PHD-type 1 zinc-finger motif lies at 214 to 264 (DAVCCICMDGECQNSNVILFCDMCNLAVHQECYGVPYIPEGQWLCRHCLQS). A C2HC pre-PHD-type zinc finger spans residues 268-301 (PADCVLCPNKGGAFKKTDDDRWGHVVCALWIPEV). The PHD-type 2 zinc finger occupies 325 to 389 (LTCYLCKQKG…RKTAYCDVHT (65 aa)). N6-acetyllysine is present on residues Lys-368, Lys-516, and Lys-519. Glycyl lysine isopeptide (Lys-Gly) (interchain with G-Cter in SUMO2) cross-links involve residues Lys-554 and Lys-594. Residues 562–666 (LRLTPLTVLL…DQGGVVLRQA (105 aa)) enclose the Bromo domain. The span at 754-763 (KLSQQHSQAP) shows a compositional bias: polar residues. 2 disordered regions span residues 754–776 (KLSQ…EDEA) and 791–847 (LETL…AAPR). Ser-803 carries the post-translational modification Phosphoserine. Lys-903 is subject to N6-acetyllysine. The region spanning 929-1012 (PLKVVWAKCS…KSKMVPLGVD (84 aa)) is the PWWP domain. A phosphoserine mark is found at Ser-1052 and Ser-1055.

In terms of assembly, component of some HBO1 complexes composed of KAT7/HBO1, MEAF6, ING4 and BRD1/BRPF2. Component of the MOZ/MORF complex composed at least of ING5, KAT6A, KAT6B, MEAF6 and one of BRPF1, BRD1/BRPF2 and BRPF3. Interacts (via PHD-type zinc finger domain) with unmodified histone H3. Interacts (via PWWP domain) with dimethylated and trimethylated 'Lys-79' on histone H3.

The protein localises to the nucleus. It localises to the chromosome. Functionally, scaffold subunit of various histone acetyltransferase (HAT) complexes, such as the MOZ/MORF and HBO1 complexes, that acts as a regulator of hematopoiesis. Plays a key role in HBO1 complex by directing KAT7/HBO1 specificity towards histone H3 'Lys-14' acetylation (H3K14ac), thereby promoting erythroid differentiation. The sequence is that of Bromodomain-containing protein 1 from Mus musculus (Mouse).